The primary structure comprises 443 residues: Tol-Pal system protein TolB (443 aa).

The N-terminal stretch at M1–A31 is a signal peptide. The disordered stretch occupies residues E422–Q443.

It belongs to the TolB family. As to quaternary structure, the Tol-Pal system is composed of five core proteins: the inner membrane proteins TolA, TolQ and TolR, the periplasmic protein TolB and the outer membrane protein Pal. They form a network linking the inner and outer membranes and the peptidoglycan layer.

The protein resides in the periplasm. Functionally, part of the Tol-Pal system, which plays a role in outer membrane invagination during cell division and is important for maintaining outer membrane integrity. The sequence is that of Tol-Pal system protein TolB from Bartonella henselae (strain ATCC 49882 / DSM 28221 / CCUG 30454 / Houston 1) (Rochalimaea henselae).